Consider the following 105-residue polypeptide: Replication initiation control protein YabA (105 aa).

Zn(2+) contacts are provided by His-79, Cys-81, Cys-95, and Cys-98.

It belongs to the YabA family. Homotetramer. Interacts with both DnaA and DnaN, acting as a bridge between these two proteins. Requires Zn(2+) as cofactor.

The protein localises to the cytoplasm. Its subcellular location is the nucleoid. Its function is as follows. Involved in control of chromosome replication initiation. Inhibits the cooperative binding of DnaA to the oriC region, thus negatively regulating initiation of chromosome replication. Inhibits the ability of DnaA-ATP to form a helix on DNA; does not disassemble preformed DnaA-DNA helices. Decreases the residence time of DnaA on the chromosome at its binding sites (oriC, replication forks and promoter-binding sites). Tethers DnaA to the replication machinery via the DNA polymerase beta sliding clamp subunit (dnaN). Associates with oriC and other DnaA targets on the chromosome in a DnaA-dependent manner. The chain is Replication initiation control protein YabA from Streptococcus suis (strain 98HAH33).